We begin with the raw amino-acid sequence, 394 residues long: Bone morphogenetic protein 15 (394 aa).

A signal peptide spans 1–18 (MVLLSILRILLLWGLVLF). The propeptide occupies 19-269 (MEHRVQMTQV…DPSLLLRRAR (251 aa)). N-linked (GlcNAc...) asparagine glycosylation is found at Asn87 and Asn238. 3 disulfide bridges follow: Cys293–Cys359, Cys322–Cys391, and Cys326–Cys393. The N-linked (GlcNAc...) asparagine glycan is linked to Asn375.

Belongs to the TGF-beta family. As to quaternary structure, homodimer or heterodimer (Potential). But, in contrast to other members of this family, cannot be disulfide-linked.

The protein localises to the secreted. May be involved in follicular development. Seems to be an oocyte-specific growth/differentiation factor that stimulates folliculogenesis and granulosa cell (GC) growth. The chain is Bone morphogenetic protein 15 (BMP15) from Bos taurus (Bovine).